Reading from the N-terminus, the 421-residue chain is MKLLITGVSHKTAPVEVRECLAFREETLPAALADLKACEGVSEAVILSTCNRVEISLTTEDAVDPREIVDNFLSRHKAVSSASIGPHLYRHEGRDAIHHLFRVAASLDSMVVGEPQILGQLKVAYAAAKDCGALCGWLDGLMSRSFSVAKRVRSETGIGQMAVSVSYAAVELARKIFGSLTNRTVMIVGAGKMSELAARHLRRSGASHVFVTNRTHERAVDMAKLFQGTPVEYARFTAMLPEVDILIASSGAPHYILHKDEMQRVISARRNKPMFLIDIAVPRNIEPAINDLDNVFLYDIDDLQEVVNSNLRERMKEADHAELLVTEEVDRMMARMKVAEVTPVIVSLQEQLEQIRSGEMEKVRRRFGPFTAQQEEALEALTRGIINKVAHGPISELRSQAGKPDGAPAIAAIRKAFHLQD.

Residues 49–52 (TCNR), S109, 114–116 (EPQ), and Q120 each bind substrate. C50 (nucleophile) is an active-site residue. 189–194 (GAGKMS) is an NADP(+) binding site.

This sequence belongs to the glutamyl-tRNA reductase family. As to quaternary structure, homodimer.

It catalyses the reaction (S)-4-amino-5-oxopentanoate + tRNA(Glu) + NADP(+) = L-glutamyl-tRNA(Glu) + NADPH + H(+). The protein operates within porphyrin-containing compound metabolism; protoporphyrin-IX biosynthesis; 5-aminolevulinate from L-glutamyl-tRNA(Glu): step 1/2. Its function is as follows. Catalyzes the NADPH-dependent reduction of glutamyl-tRNA(Glu) to glutamate 1-semialdehyde (GSA). This chain is Glutamyl-tRNA reductase, found in Solibacter usitatus (strain Ellin6076).